Here is a 180-residue protein sequence, read N- to C-terminus: MKIINIIKGVGTQLRSLGMVFSHAWRPRETLSYPDESIYSPPRYRGRIVLTRDPDGDERCVACNLCAVACPVGCISLQKAERDDGRWYPEFFRINFSRCIFCGLCEEACPTTAIQLTPDFEMGEYRRQDLVYEKEDLLISGPGKYPDYNFYRMSGMAIDGKPKGDAEHEAKPIDVKSLLP.

2 consecutive 4Fe-4S ferredoxin-type domains span residues 48–80 (IVLT…LQKA) and 90–119 (EFFR…LTPD). [4Fe-4S] cluster-binding residues include Cys60, Cys63, Cys66, Cys70, Cys99, Cys102, Cys105, and Cys109. Basic and acidic residues predominate over residues 161-174 (KPKGDAEHEAKPID). Positions 161-180 (KPKGDAEHEAKPIDVKSLLP) are disordered.

This sequence belongs to the complex I 23 kDa subunit family. As to quaternary structure, NDH-1 is composed of 14 different subunits. Subunits NuoA, H, J, K, L, M, N constitute the membrane sector of the complex. The cofactor is [4Fe-4S] cluster.

The protein resides in the cell inner membrane. The catalysed reaction is a quinone + NADH + 5 H(+)(in) = a quinol + NAD(+) + 4 H(+)(out). NDH-1 shuttles electrons from NADH, via FMN and iron-sulfur (Fe-S) centers, to quinones in the respiratory chain. The immediate electron acceptor for the enzyme in this species is believed to be ubiquinone. Couples the redox reaction to proton translocation (for every two electrons transferred, four hydrogen ions are translocated across the cytoplasmic membrane), and thus conserves the redox energy in a proton gradient. This is NADH-quinone oxidoreductase subunit I from Aeromonas salmonicida (strain A449).